A 745-amino-acid polypeptide reads, in one-letter code: DNA ligase (745 aa).

Positions 1 to 27 are disordered; sequence MRNHGPGSERKDACVSAPDPTFSDDVP. NAD(+) is bound by residues 57 to 61, 106 to 107, and Glu135; these read DAEYD and SL. Residue Lys137 is the N6-AMP-lysine intermediate of the active site. Residues Arg158 and Glu197 each contribute to the NAD(+) site. Residues 216–235 are disordered; that stretch reads GKPPFANPRNAAAGSLRQKD. NAD(+) is bound by residues Lys313 and Lys337. Residues Cys431, Cys434, Cys450, and Cys456 each contribute to the Zn(2+) site. One can recognise a BRCT domain in the interval 649 to 738; that stretch reads DGPRLLDGIT…PEAARAARLS (90 aa).

Belongs to the NAD-dependent DNA ligase family. LigA subfamily. Mg(2+) is required as a cofactor. Mn(2+) serves as cofactor.

The enzyme catalyses NAD(+) + (deoxyribonucleotide)n-3'-hydroxyl + 5'-phospho-(deoxyribonucleotide)m = (deoxyribonucleotide)n+m + AMP + beta-nicotinamide D-nucleotide.. Its function is as follows. DNA ligase that catalyzes the formation of phosphodiester linkages between 5'-phosphoryl and 3'-hydroxyl groups in double-stranded DNA using NAD as a coenzyme and as the energy source for the reaction. It is essential for DNA replication and repair of damaged DNA. This chain is DNA ligase, found in Thermobifida fusca (strain YX).